We begin with the raw amino-acid sequence, 163 residues long: Small ribosomal subunit protein uS5 (163 aa).

Residues 8-71 (FIEKVVSLNR…EQARKAMMKI (64 aa)) form the S5 DRBM domain.

Belongs to the universal ribosomal protein uS5 family. As to quaternary structure, part of the 30S ribosomal subunit. Contacts proteins S4 and S8.

Functionally, with S4 and S12 plays an important role in translational accuracy. Its function is as follows. Located at the back of the 30S subunit body where it stabilizes the conformation of the head with respect to the body. This is Small ribosomal subunit protein uS5 from Lawsonia intracellularis (strain PHE/MN1-00).